A 170-amino-acid polypeptide reads, in one-letter code: Elicitin-like protein 1 (170 aa).

Positions 1–19 are cleaved as a signal peptide; that stretch reads MFSKTLVVLAAVAAVTVNG. 3 cysteine pairs are disulfide-bonded: Cys25/Cys91, Cys47/Cys76, and Cys71/Cys118. Residues 122 to 170 form a disordered region; it reads GGGSTPTTAPPTSTTPTTAPPTGTTPTTAPPAGTTPGVTPSPTTPKPAC. Positions 126–162 are enriched in low complexity; the sequence is TPTTAPPTSTTPTTAPPTGTTPTTAPPAGTTPGVTPS.

It belongs to the elicitin family.

The protein localises to the secreted. Induces local and distal defense responses (incompatible hypersensitive reaction) in plants from the solanaceae and cruciferae families. Elicits leaf necrosis and causes the accumulation of pathogenesis-related proteins. Might interact with the lipidic molecules of the plasma membrane. This chain is Elicitin-like protein 1 (POD-1), found in Pythium oligandrum (Mycoparasitic fungus).